Reading from the N-terminus, the 358-residue chain is Histidinol-phosphate aminotransferase (358 aa).

Position 221 is an N6-(pyridoxal phosphate)lysine (Lys-221).

It belongs to the class-II pyridoxal-phosphate-dependent aminotransferase family. Histidinol-phosphate aminotransferase subfamily. In terms of assembly, homodimer. Requires pyridoxal 5'-phosphate as cofactor.

The enzyme catalyses L-histidinol phosphate + 2-oxoglutarate = 3-(imidazol-4-yl)-2-oxopropyl phosphate + L-glutamate. It participates in amino-acid biosynthesis; L-histidine biosynthesis; L-histidine from 5-phospho-alpha-D-ribose 1-diphosphate: step 7/9. This Caldicellulosiruptor saccharolyticus (strain ATCC 43494 / DSM 8903 / Tp8T 6331) protein is Histidinol-phosphate aminotransferase.